Reading from the N-terminus, the 122-residue chain is Large ribosomal subunit protein bL12 (122 aa).

The protein belongs to the bacterial ribosomal protein bL12 family. Homodimer. Part of the ribosomal stalk of the 50S ribosomal subunit. Forms a multimeric L10(L12)X complex, where L10 forms an elongated spine to which 2 to 4 L12 dimers bind in a sequential fashion. Binds GTP-bound translation factors.

Functionally, forms part of the ribosomal stalk which helps the ribosome interact with GTP-bound translation factors. Is thus essential for accurate translation. The sequence is that of Large ribosomal subunit protein bL12 from Streptococcus mutans serotype c (strain ATCC 700610 / UA159).